Here is a 648-residue protein sequence, read N- to C-terminus: Biosynthetic arginine decarboxylase (648 aa).

Lysine 109 is modified (N6-(pyridoxal phosphate)lysine). 291–301 provides a ligand contact to substrate; the sequence is LDVGGGLGVDY.

This sequence belongs to the Orn/Lys/Arg decarboxylase class-II family. SpeA subfamily. Mg(2+) is required as a cofactor. Pyridoxal 5'-phosphate serves as cofactor.

The enzyme catalyses L-arginine + H(+) = agmatine + CO2. Its function is as follows. Catalyzes the biosynthesis of agmatine from arginine. The polypeptide is Biosynthetic arginine decarboxylase (Prochlorococcus marinus (strain MIT 9313)).